Reading from the N-terminus, the 435-residue chain is Nucleoredoxin (435 aa).

Serine 2 is subject to N-acetylserine. Positions 167-314 (PKPFREVIAG…FPWHPKPVLE (148 aa)) constitute a Thioredoxin domain.

The protein belongs to the nucleoredoxin family. In terms of assembly, associates with the phosphatase 2A holoenzyme. Interacts with PPP2CA; the interaction is direct. Interacts with DVL1 (via PDZ domain); the interaction is direct and regulated by oxidative stress. Widely expressed with higher expression in testis and skin.

It is found in the cytoplasm. The protein resides in the cytosol. Its subcellular location is the nucleus. It carries out the reaction [protein]-dithiol + NAD(+) = [protein]-disulfide + NADH + H(+). The enzyme catalyses [protein]-dithiol + NADP(+) = [protein]-disulfide + NADPH + H(+). Functions as a redox-dependent negative regulator of the Wnt signaling pathway, possibly by preventing ubiquitination of DVL3 by the BCR(KLHL12) complex. May also function as a transcriptional regulator act as a regulator of protein phosphatase 2A (PP2A). This Mus musculus (Mouse) protein is Nucleoredoxin (Nxn).